The following is a 27-amino-acid chain: LICFNDFSPTARTLEYCQIGITTYNPS.

In terms of tissue distribution, expressed by the venom gland.

The protein resides in the secreted. Its function is as follows. Binds to muscle nicotinic acetylcholine receptor (nAChR) and inhibit acetylcholine from binding to the receptor, thereby impairing neuromuscular transmission. The polypeptide is Weak neurotoxin E3 (Micrurus pyrrhocryptus (Coral snake)).